The following is a 122-amino-acid chain: Large ribosomal subunit protein uL14c (122 aa).

This sequence belongs to the universal ribosomal protein uL14 family. Part of the 50S ribosomal subunit.

The protein localises to the plastid. Functionally, binds to 23S rRNA. This chain is Large ribosomal subunit protein uL14c, found in Cuscuta obtusiflora (Peruvian dodder).